A 448-amino-acid chain; its full sequence is Acyl-lipid (9-3)-desaturase (448 aa).

One can recognise a Cytochrome b5 heme-binding domain in the interval K6–S90. Residues H41 and H64 each contribute to the heme site. 2 helical membrane-spanning segments follow: residues I112 to L132 and V137 to I157. Residues H159 to H163 carry the Histidine box-1 motif. A helical membrane pass occupies residues L172–W192. The Histidine box-2 motif lies at H196–H200. 3 consecutive transmembrane segments (helical) span residues L212 to F232, F254 to L274, and L286 to W306. The Histidine box-3 motif lies at Q373–H377.

The protein belongs to the fatty acid desaturase type 1 family.

Its subcellular location is the endoplasmic reticulum membrane. The catalysed reaction is (9Z,12Z,15Z)-octadecatrienoyl-containing glycerolipid + 2 Fe(II)-[cytochrome b5] + O2 + 2 H(+) = (6Z,9Z,12Z,15Z)-octadecatetraenoyl-containing glycerolipid + 2 Fe(III)-[cytochrome b5] + 2 H2O. It catalyses the reaction a (9Z,12Z)-octadecadienoyl-containing glycerolipid + 2 Fe(II)-[cytochrome b5] + O2 + 2 H(+) = (6Z,9Z,12Z)-octadecatrienoyl-containing glycerolipid + 2 Fe(III)-[cytochrome b5] + 2 H2O. It functions in the pathway lipid metabolism; polyunsaturated fatty acid biosynthesis. Functionally, fatty acid desaturase able to introduce a delta(6)-double bond into delta(9)-unsaturated fatty-acid substrates. Can use both linoleic acid (18:2(9Z,12Z)) and alpha-linolenic acid (18:3(9Z,12Z,15Z)) as substrates. This chain is Acyl-lipid (9-3)-desaturase, found in Borago officinalis (Bourrache).